The sequence spans 375 residues: Esterase AN6793 (375 aa).

The disordered stretch occupies residues 138 to 158 (RHPQPGLDPGHGHRHKRMPPL).

This sequence belongs to the sidJ hydrolase family. In terms of assembly, homodimer.

Its pathway is secondary metabolite biosynthesis. Esterase; part of a cluster that mediates the biosynthesis of a yet undetermined secondary metabolite. With the HR-PKS AN6791, produces a pathway intermediate compound with molecular weight 258. This is Esterase AN6793 from Emericella nidulans (strain FGSC A4 / ATCC 38163 / CBS 112.46 / NRRL 194 / M139) (Aspergillus nidulans).